The primary structure comprises 204 residues: Tumor necrosis factor alpha-induced protein 8-like protein 3 (204 aa).

Positions 1–10 are enriched in acidic residues; it reads MDSDSGEQSE. The interval 1 to 20 is disordered; sequence MDSDSGEQSEGEPGTAAGPH. The segment at 21–204 is binding to phosphoinositides; it reads VFSSKNLALQ…INKLLDDKIL (184 aa).

This sequence belongs to the TNFAIP8 family. As to expression, widely expressed (at protein level).

It localises to the cytoplasm. Its subcellular location is the cell membrane. Acts as a lipid transfer protein. Preferentially captures and shuttles two lipid second messengers, i.e., phosphatidylinositol 4,5- bisphosphate and phosphatidylinositol 3,4,5-trisphosphate and increases their levels in the plasma membrane. Additionally, may also function as a lipid-presenting protein to enhance the activity of the PI3K-AKT and MEK-ERK pathways. May act as a regulator of tumorigenesis through its activation of phospholipid signaling. The chain is Tumor necrosis factor alpha-induced protein 8-like protein 3 (Tnfaip8l3) from Mus musculus (Mouse).